Here is a 333-residue protein sequence, read N- to C-terminus: Holliday junction branch migration complex subunit RuvB (333 aa).

The segment at 1 to 182 is large ATPase domain (RuvB-L); sequence MEERLVSGEV…FGVISRLEYY (182 aa). ATP-binding positions include Leu-21, Arg-22, Gly-63, Lys-66, Thr-67, Thr-68, 129-131, Arg-172, Tyr-182, and Arg-219; that span reads EDY. Residue Thr-67 participates in Mg(2+) binding. Positions 183–253 are small ATPAse domain (RuvB-S); it reads HVDQLAQIIE…LAVEALERLQ (71 aa). Residues 256–333 are head domain (RuvB-H); the sequence is RLGLDQIDHK…THLGMEVPKR (78 aa). The DNA site is built by Arg-311 and Arg-316.

Belongs to the RuvB family. In terms of assembly, homohexamer. Forms an RuvA(8)-RuvB(12)-Holliday junction (HJ) complex. HJ DNA is sandwiched between 2 RuvA tetramers; dsDNA enters through RuvA and exits via RuvB. An RuvB hexamer assembles on each DNA strand where it exits the tetramer. Each RuvB hexamer is contacted by two RuvA subunits (via domain III) on 2 adjacent RuvB subunits; this complex drives branch migration. In the full resolvosome a probable DNA-RuvA(4)-RuvB(12)-RuvC(2) complex forms which resolves the HJ.

The protein resides in the cytoplasm. The catalysed reaction is ATP + H2O = ADP + phosphate + H(+). The RuvA-RuvB-RuvC complex processes Holliday junction (HJ) DNA during genetic recombination and DNA repair, while the RuvA-RuvB complex plays an important role in the rescue of blocked DNA replication forks via replication fork reversal (RFR). RuvA specifically binds to HJ cruciform DNA, conferring on it an open structure. The RuvB hexamer acts as an ATP-dependent pump, pulling dsDNA into and through the RuvAB complex. RuvB forms 2 homohexamers on either side of HJ DNA bound by 1 or 2 RuvA tetramers; 4 subunits per hexamer contact DNA at a time. Coordinated motions by a converter formed by DNA-disengaged RuvB subunits stimulates ATP hydrolysis and nucleotide exchange. Immobilization of the converter enables RuvB to convert the ATP-contained energy into a lever motion, pulling 2 nucleotides of DNA out of the RuvA tetramer per ATP hydrolyzed, thus driving DNA branch migration. The RuvB motors rotate together with the DNA substrate, which together with the progressing nucleotide cycle form the mechanistic basis for DNA recombination by continuous HJ branch migration. Branch migration allows RuvC to scan DNA until it finds its consensus sequence, where it cleaves and resolves cruciform DNA. In Geobacillus kaustophilus (strain HTA426), this protein is Holliday junction branch migration complex subunit RuvB.